The sequence spans 388 residues: Succinate--CoA ligase [ADP-forming] subunit beta (388 aa).

The 238-residue stretch at 9–246 (KDILRQFGVP…FEEEDPAEVL (238 aa)) folds into the ATP-grasp domain. ATP-binding positions include Lys-46, 53-55 (GRG), Glu-99, Ala-102, and Glu-107. Asn-201 and Asp-215 together coordinate Mg(2+). Substrate-binding positions include Asn-266 and 323–325 (GIM).

Belongs to the succinate/malate CoA ligase beta subunit family. Heterotetramer of two alpha and two beta subunits. It depends on Mg(2+) as a cofactor.

The catalysed reaction is succinate + ATP + CoA = succinyl-CoA + ADP + phosphate. It carries out the reaction GTP + succinate + CoA = succinyl-CoA + GDP + phosphate. It participates in carbohydrate metabolism; tricarboxylic acid cycle; succinate from succinyl-CoA (ligase route): step 1/1. Functionally, succinyl-CoA synthetase functions in the citric acid cycle (TCA), coupling the hydrolysis of succinyl-CoA to the synthesis of either ATP or GTP and thus represents the only step of substrate-level phosphorylation in the TCA. The beta subunit provides nucleotide specificity of the enzyme and binds the substrate succinate, while the binding sites for coenzyme A and phosphate are found in the alpha subunit. This chain is Succinate--CoA ligase [ADP-forming] subunit beta, found in Verminephrobacter eiseniae (strain EF01-2).